A 355-amino-acid polypeptide reads, in one-letter code: Putative inositol monophosphatase 3 (355 aa).

Residues 16–36 (LPATIVAILLTFVLVYFLNFH) traverse the membrane as a helical segment. 5 residues coordinate Mg(2+): Glu127, Asp167, Leu169, Asp170, and Asp292. Substrate is bound at residue Glu127. Substrate is bound by residues 169-172 (LDAT) and Asp292.

This sequence belongs to the inositol monophosphatase superfamily. Mg(2+) is required as a cofactor.

Its subcellular location is the membrane. The catalysed reaction is a myo-inositol phosphate + H2O = myo-inositol + phosphate. It functions in the pathway polyol metabolism; myo-inositol biosynthesis; myo-inositol from D-glucose 6-phosphate: step 2/2. This is Putative inositol monophosphatase 3 from Drosophila melanogaster (Fruit fly).